A 480-amino-acid chain; its full sequence is M-phase inducer phosphatase cdc-25.2 (480 aa).

The segment covering Met1–Glu20 has biased composition (polar residues). The disordered stretch occupies residues Met1–Ser35. Positions Phe243–Ile349 constitute a Rhodanese domain. Positions Thr411–Pro452 are disordered.

Belongs to the MPI phosphatase family.

It catalyses the reaction O-phospho-L-tyrosyl-[protein] + H2O = L-tyrosyl-[protein] + phosphate. Its function is as follows. Required for intestinal cell division following the 16E cell stage of embryogenesis. Regulates intestinal cell divisions and binucleations probably by modulating the activity of the cell cycle regulator wee-1.3 and by activating the cdk-1/cyb-1 complex. Plays a role in male tail development, via regulation of the cell divisions of the ray precursor cell lineages, perhaps acting together with cell cycle regulators cyl-1, cdk-1, cyb-3, and cyd-1. This is M-phase inducer phosphatase cdc-25.2 from Caenorhabditis elegans.